A 261-amino-acid polypeptide reads, in one-letter code: Ribosomal RNA small subunit methyltransferase A (261 aa).

Asn-20, Leu-22, Gly-47, Glu-68, Asp-90, and Asn-110 together coordinate S-adenosyl-L-methionine.

Belongs to the class I-like SAM-binding methyltransferase superfamily. rRNA adenine N(6)-methyltransferase family. RsmA subfamily.

It is found in the cytoplasm. The enzyme catalyses adenosine(1518)/adenosine(1519) in 16S rRNA + 4 S-adenosyl-L-methionine = N(6)-dimethyladenosine(1518)/N(6)-dimethyladenosine(1519) in 16S rRNA + 4 S-adenosyl-L-homocysteine + 4 H(+). Its function is as follows. Specifically dimethylates two adjacent adenosines (A1518 and A1519) in the loop of a conserved hairpin near the 3'-end of 16S rRNA in the 30S particle. May play a critical role in biogenesis of 30S subunits. This Prosthecochloris aestuarii (strain DSM 271 / SK 413) protein is Ribosomal RNA small subunit methyltransferase A.